Reading from the N-terminus, the 760-residue chain is Xaa-Pro dipeptidyl-peptidase (760 aa).

Active-site charge relay system residues include serine 349, aspartate 469, and histidine 499.

The protein belongs to the peptidase S15 family. Homodimer.

It localises to the cytoplasm. The catalysed reaction is Hydrolyzes Xaa-Pro-|- bonds to release unblocked, N-terminal dipeptides from substrates including Ala-Pro-|-p-nitroanilide and (sequentially) Tyr-Pro-|-Phe-Pro-|-Gly-Pro-|-Ile.. Its function is as follows. Removes N-terminal dipeptides sequentially from polypeptides having unsubstituted N-termini provided that the penultimate residue is proline. This is Xaa-Pro dipeptidyl-peptidase from Streptococcus pyogenes serotype M28 (strain MGAS6180).